A 246-amino-acid chain; its full sequence is MTMDKSELVQKAKLAEQAERYDDMAAAMKAVTEQGHELSNEERNLLSVAYKNVVGARRSSWRVISSIEQKTERNEKKQQMGKEYREKIEAELQDICSDVLELLDKYLILNATHAESKVFYLKMKGDYFRYLSEVASGDNKQTTVSNSQQAYQEAFEISKKEMQPTHPIRLGLALNFSVFYYEILNSPEKACSLAKTAFDEAIAELDTLNEESYKDSTLIMQLLRDNLTLWTSENQGDEGDAGEGEN.

N-acetylmethionine is present on Met-1. Residue Thr-2 is modified to N-acetylthreonine; in 14-3-3 protein beta/alpha, N-terminally processed. Thr-2 carries the post-translational modification Phosphothreonine. Lys-5 bears the N6-acetyllysine mark. Lys-51 bears the N6-acetyllysine; alternate mark. A Glycyl lysine isopeptide (Lys-Gly) (interchain with G-Cter in SUMO2); alternate cross-link involves residue Lys-51. At Ser-60 the chain carries Phosphoserine. N6-acetyllysine is present on Lys-70. 2 positions are modified to 3'-nitrotyrosine: Tyr-84 and Tyr-106. Lys-117 is subject to N6-acetyllysine. Ser-186 and Ser-232 each carry phosphoserine.

The protein belongs to the 14-3-3 family. As to quaternary structure, homodimer. Interacts with SAMSN1 and PRKCE. Interacts with AKAP13. Interacts with SSH1 and TORC2/CRTC2. Interacts with ABL1; the interaction results in cytoplasmic location of ABL1 and inhibition of cABL-mediated apoptosis. Interacts with ROR2 (dimer); the interaction results in phosphorylation of YWHAB on tyrosine residues. Interacts with GAB2. Interacts with YAP1 (phosphorylated form). Interacts with the phosphorylated (by AKT1) form of SRPK2. Interacts with PKA-phosphorylated AANAT. Interacts with MYO1C. Interacts with SIRT2. Interacts with the 'Thr-369' phosphorylated form of DAPK2. Interacts with PI4KB, TBC1D22A and TBC1D22B. Interacts with the 'Ser-1134' and 'Ser-1161' phosphorylated form of SOS1. Interacts (via phosphorylated form) with YWHAB; this interaction occurs in a protein kinase AKT1-dependent manner. Interacts with SLITRK1. Interacts with SYNPO2 (phosphorylated form); YWHAB competes with ACTN2 for interaction with SYNPO2. Interacts with RIPOR2 (via phosphorylated form); this interaction occurs in a chemokine-dependent manner and does not compete for binding of RIPOR2 with RHOA nor blocks inhibition of RIPOR2-mediated RHOA activity. Interacts with MARK2 and MARK3. Interacts with TESK1; the interaction is dependent on the phosphorylation of TESK1 'Ser-439' and inhibits TESK1 kinase activity. Interacts with MEFV. Interacts with HDAC4. Interacts with ADAM22 (via C-terminus). In terms of processing, the alpha, brain-specific form differs from the beta form in being phosphorylated. Phosphorylated on Ser-60 by protein kinase C delta type catalytic subunit in a sphingosine-dependent fashion. Post-translationally, isoform Short contains a N-acetylmethionine at position 1.

It is found in the cytoplasm. Its subcellular location is the melanosome. Adapter protein implicated in the regulation of a large spectrum of both general and specialized signaling pathways. Binds to a large number of partners, usually by recognition of a phosphoserine or phosphothreonine motif. Binding generally results in the modulation of the activity of the binding partner. Negative regulator of osteogenesis. Blocks the nuclear translocation of the phosphorylated form (by AKT1) of SRPK2 and antagonizes its stimulatory effect on cyclin D1 expression resulting in blockage of neuronal apoptosis elicited by SRPK2. Negative regulator of signaling cascades that mediate activation of MAP kinases via AKAP13. This is 14-3-3 protein beta/alpha (Ywhab) from Rattus norvegicus (Rat).